Reading from the N-terminus, the 192-residue chain is uncharacterized protein (192 aa).

Residues 29-160 (HRQAAVLIPI…PLDIYRRGDS (132 aa)) enclose the Nudix hydrolase domain. Residues 67–89 (GAVDDTDASVIAAALREAEEEVA) carry the Nudix box motif. Positions 83 and 87 each coordinate Mg(2+).

The protein belongs to the Nudix hydrolase family. PCD1 subfamily. The cofactor is Mn(2+). It depends on Mg(2+) as a cofactor.

Probably mediates the hydrolysis of some nucleoside diphosphate derivatives. This is an uncharacterized protein from Shigella flexneri.